Consider the following 329-residue polypeptide: Phenylalanine--tRNA ligase alpha subunit (329 aa).

Glu254 serves as a coordination point for Mg(2+).

The protein belongs to the class-II aminoacyl-tRNA synthetase family. Phe-tRNA synthetase alpha subunit type 1 subfamily. Tetramer of two alpha and two beta subunits. Mg(2+) is required as a cofactor.

The protein resides in the cytoplasm. The enzyme catalyses tRNA(Phe) + L-phenylalanine + ATP = L-phenylalanyl-tRNA(Phe) + AMP + diphosphate + H(+). The chain is Phenylalanine--tRNA ligase alpha subunit from Actinobacillus succinogenes (strain ATCC 55618 / DSM 22257 / CCUG 43843 / 130Z).